The sequence spans 265 residues: Glutamate racemase (265 aa).

Substrate is bound by residues Asp-10–Ser-11 and Tyr-42–Gly-43. Cys-73 serves as the catalytic Proton donor/acceptor. A substrate-binding site is contributed by Asn-74–Thr-75. Cys-180 (proton donor/acceptor) is an active-site residue. Residue Thr-181–His-182 coordinates substrate.

This sequence belongs to the aspartate/glutamate racemases family.

The catalysed reaction is L-glutamate = D-glutamate. Its pathway is cell wall biogenesis; peptidoglycan biosynthesis. Functionally, provides the (R)-glutamate required for cell wall biosynthesis. The protein is Glutamate racemase of Synechococcus sp. (strain CC9605).